A 210-amino-acid chain; its full sequence is Coatomer subunit zeta-2 (210 aa).

A compositionally biased stretch (basic and acidic residues) spans 1–12 (MQRPEAWPRPHP). Residues 1-34 (MQRPEAWPRPHPGEGAAAAQAGGPAPPARAGEPS) form a disordered region. Residues 13–34 (GEGAAAAQAGGPAPPARAGEPS) show a composition bias toward low complexity.

Belongs to the adaptor complexes small subunit family. In terms of assembly, oligomeric complex.

It localises to the cytoplasm. The protein resides in the endoplasmic reticulum-Golgi intermediate compartment membrane. Its subcellular location is the golgi apparatus membrane. It is found in the cytoplasmic vesicle. The protein localises to the COPI-coated vesicle membrane. The coatomer is a cytosolic protein complex that binds to dilysine motifs and reversibly associates with Golgi non-clathrin-coated vesicles, which further mediate biosynthetic protein transport from the ER, via the Golgi up to the trans Golgi network. Coatomer complex is required for budding from Golgi membranes, and is essential for the retrograde Golgi-to-ER transport of dilysine-tagged proteins. The zeta subunit may be involved in regulating the coat assembly and, hence, the rate of biosynthetic protein transport due to its association-dissociation properties with the coatomer complex. The sequence is that of Coatomer subunit zeta-2 (COPZ2) from Homo sapiens (Human).